A 459-amino-acid polypeptide reads, in one-letter code: Putrescine aminotransferase (459 aa).

Residues 150 to 151 (GT) and Gln-274 contribute to the pyridoxal 5'-phosphate site. Position 300 is an N6-(pyridoxal phosphate)lysine (Lys-300). Thr-332 is a pyridoxal 5'-phosphate binding site.

Belongs to the class-III pyridoxal-phosphate-dependent aminotransferase family. Putrescine aminotransferase subfamily. Pyridoxal 5'-phosphate serves as cofactor.

The catalysed reaction is an alkane-alpha,omega-diamine + 2-oxoglutarate = an omega-aminoaldehyde + L-glutamate. It carries out the reaction putrescine + 2-oxoglutarate = 1-pyrroline + L-glutamate + H2O. It catalyses the reaction cadaverine + 2-oxoglutarate = 5-aminopentanal + L-glutamate. It participates in amine and polyamine degradation; putrescine degradation; 4-aminobutanal from putrescine (transaminase route): step 1/1. Functionally, catalyzes the aminotransferase reaction from putrescine to 2-oxoglutarate, leading to glutamate and 4-aminobutanal, which spontaneously cyclizes to form 1-pyrroline. This is the first step in one of two pathways for putrescine degradation, where putrescine is converted into 4-aminobutanoate (gamma-aminobutyrate or GABA) via 4-aminobutanal. Also functions as a cadaverine transaminase in a a L-lysine degradation pathway to succinate that proceeds via cadaverine, glutarate and L-2-hydroxyglutarate. The polypeptide is Putrescine aminotransferase (Salmonella agona (strain SL483)).